We begin with the raw amino-acid sequence, 381 residues long: Cobalt-precorrin-5B C(1)-methyltransferase (381 aa).

The protein belongs to the CbiD family.

It carries out the reaction Co-precorrin-5B + S-adenosyl-L-methionine = Co-precorrin-6A + S-adenosyl-L-homocysteine. Its pathway is cofactor biosynthesis; adenosylcobalamin biosynthesis; cob(II)yrinate a,c-diamide from sirohydrochlorin (anaerobic route): step 6/10. In terms of biological role, catalyzes the methylation of C-1 in cobalt-precorrin-5B to form cobalt-precorrin-6A. The protein is Cobalt-precorrin-5B C(1)-methyltransferase of Prochlorococcus marinus (strain SARG / CCMP1375 / SS120).